A 202-amino-acid polypeptide reads, in one-letter code: Syndecan-2 (202 aa).

Residues 1–18 (MQRAWILLTLGLMACVSA) form the signal peptide. At 19–145 (ETRTELTSDK…HSDNLFKRTE (127 aa)) the chain is on the extracellular side. Residues Ser-41, Ser-55, and Ser-57 are each glycosylated (O-linked (Xyl...) (glycosaminoglycan) serine). Disordered regions lie at residues 41 to 63 (SGVY…DEDI) and 88 to 118 (ETMT…ISEA). A compositionally biased stretch (polar residues) spans 91-103 (TLKTQSITPAQTE). A compositionally biased stretch (acidic residues) spans 104–117 (SPEETDKEEVDISE). The residue at position 116 (Ser-116) is a Phosphoserine. A helical membrane pass occupies residues 146–170 (VLAAVIAGGVIGFLFAIFLILLLVY). At 171 to 202 (RMRKKDEGSYDLGERKPSSAAYQKAPTKEFYA) the chain is on the cytoplasmic side. Residues 179 to 202 (SYDLGERKPSSAAYQKAPTKEFYA) are disordered. Ser-188 is subject to Phosphoserine.

The protein belongs to the syndecan proteoglycan family. As to quaternary structure, interacts (via cytoplasmic domain) with SARM1. Forms a complex with SDCBP and PDCD6IP. In terms of processing, O-glycosylated; contains both heparan sulfate and chondroitin sulfate. Phosphorylated on serine residues. As to expression, preferential expression in cells of mesenchymal origin.

It is found in the membrane. Functionally, cell surface proteoglycan which regulates dendritic arbor morphogenesis. This chain is Syndecan-2 (Sdc2), found in Mus musculus (Mouse).